Consider the following 379-residue polypeptide: Succinyl-diaminopimelate desuccinylase (379 aa).

His70 is a binding site for Zn(2+). Asp72 is a catalytic residue. A Zn(2+)-binding site is contributed by Asp103. Glu137 (proton acceptor) is an active-site residue. Zn(2+) contacts are provided by Glu138, Glu166, and His352.

Belongs to the peptidase M20A family. DapE subfamily. Homodimer. Zn(2+) serves as cofactor. Co(2+) is required as a cofactor.

The enzyme catalyses N-succinyl-(2S,6S)-2,6-diaminopimelate + H2O = (2S,6S)-2,6-diaminopimelate + succinate. It functions in the pathway amino-acid biosynthesis; L-lysine biosynthesis via DAP pathway; LL-2,6-diaminopimelate from (S)-tetrahydrodipicolinate (succinylase route): step 3/3. Functionally, catalyzes the hydrolysis of N-succinyl-L,L-diaminopimelic acid (SDAP), forming succinate and LL-2,6-diaminopimelate (DAP), an intermediate involved in the bacterial biosynthesis of lysine and meso-diaminopimelic acid, an essential component of bacterial cell walls. The protein is Succinyl-diaminopimelate desuccinylase of Shewanella baltica (strain OS195).